We begin with the raw amino-acid sequence, 305 residues long: Porphobilinogen deaminase (305 aa).

C239 bears the S-(dipyrrolylmethanemethyl)cysteine mark.

This sequence belongs to the HMBS family. As to quaternary structure, monomer. The cofactor is dipyrromethane.

The catalysed reaction is 4 porphobilinogen + H2O = hydroxymethylbilane + 4 NH4(+). Its pathway is porphyrin-containing compound metabolism; protoporphyrin-IX biosynthesis; coproporphyrinogen-III from 5-aminolevulinate: step 2/4. Functionally, tetrapolymerization of the monopyrrole PBG into the hydroxymethylbilane pre-uroporphyrinogen in several discrete steps. The sequence is that of Porphobilinogen deaminase from Dichelobacter nodosus (strain VCS1703A).